The following is a 324-amino-acid chain: Acetyl-coenzyme A carboxylase carboxyl transferase subunit alpha (324 aa).

The CoA carboxyltransferase C-terminal domain maps to Gln-44–Asp-298.

It belongs to the AccA family. As to quaternary structure, acetyl-CoA carboxylase is a heterohexamer composed of biotin carboxyl carrier protein (AccB), biotin carboxylase (AccC) and two subunits each of ACCase subunit alpha (AccA) and ACCase subunit beta (AccD).

The protein localises to the cytoplasm. The catalysed reaction is N(6)-carboxybiotinyl-L-lysyl-[protein] + acetyl-CoA = N(6)-biotinyl-L-lysyl-[protein] + malonyl-CoA. The protein operates within lipid metabolism; malonyl-CoA biosynthesis; malonyl-CoA from acetyl-CoA: step 1/1. In terms of biological role, component of the acetyl coenzyme A carboxylase (ACC) complex. First, biotin carboxylase catalyzes the carboxylation of biotin on its carrier protein (BCCP) and then the CO(2) group is transferred by the carboxyltransferase to acetyl-CoA to form malonyl-CoA. The polypeptide is Acetyl-coenzyme A carboxylase carboxyl transferase subunit alpha (Trichodesmium erythraeum (strain IMS101)).